A 351-amino-acid polypeptide reads, in one-letter code: Methylthioribose-1-phosphate isomerase (351 aa).

Substrate contacts are provided by residues 51 to 53 (RGA), Arg-94, and Gln-199. Asp-240 acts as the Proton donor in catalysis. 250–251 (NK) serves as a coordination point for substrate.

Belongs to the EIF-2B alpha/beta/delta subunits family. MtnA subfamily. In terms of assembly, homodimer.

It carries out the reaction 5-(methylsulfanyl)-alpha-D-ribose 1-phosphate = 5-(methylsulfanyl)-D-ribulose 1-phosphate. It participates in amino-acid biosynthesis; L-methionine biosynthesis via salvage pathway; L-methionine from S-methyl-5-thio-alpha-D-ribose 1-phosphate: step 1/6. Functionally, catalyzes the interconversion of methylthioribose-1-phosphate (MTR-1-P) into methylthioribulose-1-phosphate (MTRu-1-P). This chain is Methylthioribose-1-phosphate isomerase, found in Bacillus thuringiensis (strain Al Hakam).